A 100-amino-acid chain; its full sequence is NADH-quinone oxidoreductase subunit K (100 aa).

3 helical membrane-spanning segments follow: residues Val-2 to Val-22, Ile-29 to Phe-49, and Phe-63 to Ile-83.

It belongs to the complex I subunit 4L family. As to quaternary structure, NDH-1 is composed of 15 different subunits. Subunits NuoA, H, J, K, L, M, N constitute the membrane sector of the complex.

The protein resides in the cell membrane. It catalyses the reaction a quinone + NADH + 5 H(+)(in) = a quinol + NAD(+) + 4 H(+)(out). NDH-1 shuttles electrons from NADH, via FMN and iron-sulfur (Fe-S) centers, to quinones in the respiratory chain. The immediate electron acceptor for the enzyme in this species is believed to be a menaquinone. Couples the redox reaction to proton translocation (for every two electrons transferred, four hydrogen ions are translocated across the cytoplasmic membrane), and thus conserves the redox energy in a proton gradient. This is NADH-quinone oxidoreductase subunit K from Deinococcus deserti (strain DSM 17065 / CIP 109153 / LMG 22923 / VCD115).